The following is a 75-amino-acid chain: Small integral membrane protein 15 (75 aa).

A helical membrane pass occupies residues 21 to 41; the sequence is YGFLITVLLALTPLFLASAVL. Residues 49–75 are a coiled coil; it reads IEAKERDQKKKQKRQENIAKAKRTKKD. Residues 52–67 show a composition bias toward basic and acidic residues; it reads KERDQKKKQKRQENIA. The segment at 52–75 is disordered; sequence KERDQKKKQKRQENIAKAKRTKKD.

This sequence belongs to the SMIM15 family.

The protein resides in the membrane. The chain is Small integral membrane protein 15 (smim15) from Xenopus laevis (African clawed frog).